Here is a 240-residue protein sequence, read N- to C-terminus: NADPH-flavin oxidoreductase (240 aa).

FMN contacts are provided by residues 11–15, Ser-39, 67–69, 128–131, and 167–169; these read HRSIR, QAY, YIGG, and KPR.

This sequence belongs to the flavin oxidoreductase frp family. As to quaternary structure, homodimer.

The enzyme catalyses FMNH2 + NADP(+) = FMN + NADPH + 2 H(+). Catalyzes the NADPH-dependent reduction of FMN to FMNH(2). Involved in bioluminescence by providing FMNH(2) to luciferase. The sequence is that of NADPH-flavin oxidoreductase from Vibrio harveyi (Beneckea harveyi).